A 240-amino-acid polypeptide reads, in one-letter code: Heme oxygenase 1 (240 aa).

The heme b site is built by Arg-10, His-17, Tyr-125, Lys-168, and Arg-172.

Belongs to the heme oxygenase family.

It carries out the reaction heme b + 3 reduced [NADPH--hemoprotein reductase] + 3 O2 = biliverdin IXalpha + CO + Fe(2+) + 3 oxidized [NADPH--hemoprotein reductase] + 3 H2O + H(+). Its function is as follows. Catalyzes the opening of the heme ring with the release of iron. Key enzyme in the synthesis of the chromophoric part of the photosynthetic antennae. This is Heme oxygenase 1 (pbsA1) from Synechocystis sp. (strain ATCC 27184 / PCC 6803 / Kazusa).